We begin with the raw amino-acid sequence, 481 residues long: Aspartyl/glutamyl-tRNA(Asn/Gln) amidotransferase subunit B (481 aa).

Belongs to the GatB/GatE family. GatB subfamily. Heterotrimer of A, B and C subunits.

It carries out the reaction L-glutamyl-tRNA(Gln) + L-glutamine + ATP + H2O = L-glutaminyl-tRNA(Gln) + L-glutamate + ADP + phosphate + H(+). The enzyme catalyses L-aspartyl-tRNA(Asn) + L-glutamine + ATP + H2O = L-asparaginyl-tRNA(Asn) + L-glutamate + ADP + phosphate + 2 H(+). Allows the formation of correctly charged Asn-tRNA(Asn) or Gln-tRNA(Gln) through the transamidation of misacylated Asp-tRNA(Asn) or Glu-tRNA(Gln) in organisms which lack either or both of asparaginyl-tRNA or glutaminyl-tRNA synthetases. The reaction takes place in the presence of glutamine and ATP through an activated phospho-Asp-tRNA(Asn) or phospho-Glu-tRNA(Gln). The sequence is that of Aspartyl/glutamyl-tRNA(Asn/Gln) amidotransferase subunit B from Cellvibrio japonicus (strain Ueda107) (Pseudomonas fluorescens subsp. cellulosa).